The primary structure comprises 487 residues: ESCRT-I complex subunit vps23 (487 aa).

Positions 428–487 (SERELKYYELKRKDEKLDEGIRALNQALHHESIMPASWLKGIKLLARQQFLIRDEMLQYS) constitute an SB domain.

Component of the ESCRT-I complex (endosomal sorting complex required for transport I).

It is found in the cytoplasm. It localises to the endosome. The protein localises to the late endosome membrane. Functionally, component of the ESCRT-I complex, a regulator of vesicular trafficking process. Binds to ubiquitinated cargo proteins and is required for the sorting of endocytic ubiquitinated cargos into multivesicular bodies (MVBs). Mediates the association to the ESCRT-0 complex. This Schizosaccharomyces pombe (strain 972 / ATCC 24843) (Fission yeast) protein is ESCRT-I complex subunit vps23 (sst6).